The primary structure comprises 363 residues: NADH-quinone oxidoreductase subunit H (363 aa).

The next 9 helical transmembrane spans lie at 62–82 (GPMY…KLLF), 94–114 (AIFV…WAVV), 127–147 (VGLL…ILAG), 166–186 (VVSY…AAGS), 202–222 (FFDW…VSGV), 239–257 (IVAG…LFFL), 264–286 (ILVS…QGWV), 293–313 (LIDW…LFFA), and 339–359 (FIPL…SGVI).

It belongs to the complex I subunit 1 family. As to quaternary structure, NDH-1 is composed of 14 different subunits. Subunits NuoA, H, J, K, L, M, N constitute the membrane sector of the complex.

The protein localises to the cell inner membrane. It catalyses the reaction a quinone + NADH + 5 H(+)(in) = a quinol + NAD(+) + 4 H(+)(out). Functionally, NDH-1 shuttles electrons from NADH, via FMN and iron-sulfur (Fe-S) centers, to quinones in the respiratory chain. The immediate electron acceptor for the enzyme in this species is believed to be ubiquinone. Couples the redox reaction to proton translocation (for every two electrons transferred, four hydrogen ions are translocated across the cytoplasmic membrane), and thus conserves the redox energy in a proton gradient. This subunit may bind ubiquinone. This is NADH-quinone oxidoreductase subunit H from Xylella fastidiosa (strain 9a5c).